The following is a 345-amino-acid chain: Glycosyltransferase 1 domain-containing protein 1 (345 aa).

Residues 1–19 (MKILFLACLRAHTGNSTTA) form the signal peptide. 2 N-linked (GlcNAc...) asparagine glycosylation sites follow: N246 and N322.

This sequence belongs to the glycosyltransferase group 1 family. Glycosyltransferase 4 subfamily.

The protein resides in the secreted. The polypeptide is Glycosyltransferase 1 domain-containing protein 1 (glt1d1) (Xenopus tropicalis (Western clawed frog)).